Reading from the N-terminus, the 93-residue chain is YcgL domain-containing protein Shal_1837 (93 aa).

A YcgL domain is found at 1–85 (MICAVYKSRR…PVVNLLEQHK (85 aa)).

In Shewanella halifaxensis (strain HAW-EB4), this protein is YcgL domain-containing protein Shal_1837.